The sequence spans 394 residues: Elongation factor Tu (394 aa).

In terms of domain architecture, tr-type G spans 10–204 (KPHVNVGTIG…ALDSYIPEPE (195 aa)). Residues 19-26 (GHVDHGKT) are G1. 19–26 (GHVDHGKT) contributes to the GTP binding site. T26 serves as a coordination point for Mg(2+). Residues 60-64 (GITIN) form a G2 region. Residues 81–84 (DCPG) form a G3 region. GTP-binding positions include 81-85 (DCPGH) and 136-139 (NKCD). Residues 136 to 139 (NKCD) form a G4 region. The tract at residues 174 to 176 (SAL) is G5.

The protein belongs to the TRAFAC class translation factor GTPase superfamily. Classic translation factor GTPase family. EF-Tu/EF-1A subfamily. In terms of assembly, monomer.

The protein resides in the cytoplasm. It carries out the reaction GTP + H2O = GDP + phosphate + H(+). GTP hydrolase that promotes the GTP-dependent binding of aminoacyl-tRNA to the A-site of ribosomes during protein biosynthesis. The chain is Elongation factor Tu from Sodalis glossinidius (strain morsitans).